Here is an 82-residue protein sequence, read N- to C-terminus: DNA-directed RNA polymerase subunit omega (82 aa).

The protein belongs to the RNA polymerase subunit omega family. As to quaternary structure, in cyanobacteria the RNAP catalytic core is composed of 2 alpha, 1 beta, 1 beta', 1 gamma and 1 omega subunit. When a sigma factor is associated with the core the holoenzyme is formed, which can initiate transcription.

The enzyme catalyses RNA(n) + a ribonucleoside 5'-triphosphate = RNA(n+1) + diphosphate. In terms of biological role, promotes RNA polymerase assembly. Latches the N- and C-terminal regions of the beta' subunit thereby facilitating its interaction with the beta and alpha subunits. This Trichodesmium erythraeum (strain IMS101) protein is DNA-directed RNA polymerase subunit omega.